A 91-amino-acid chain; its full sequence is Elongation factor 1-beta (91 aa).

The protein belongs to the EF-1-beta/EF-1-delta family.

In terms of biological role, promotes the exchange of GDP for GTP in EF-1-alpha/GDP, thus allowing the regeneration of EF-1-alpha/GTP that could then be used to form the ternary complex EF-1-alpha/GTP/AAtRNA. The sequence is that of Elongation factor 1-beta from Thermococcus gammatolerans (strain DSM 15229 / JCM 11827 / EJ3).